The sequence spans 504 residues: Cytochrome P450 6a9 (504 aa).

Cys449 contributes to the heme binding site.

Belongs to the cytochrome P450 family. It depends on heme as a cofactor.

It is found in the endoplasmic reticulum membrane. Its subcellular location is the microsome membrane. Functionally, involved in the metabolism of insect hormones and in the breakdown of synthetic insecticides. This Drosophila melanogaster (Fruit fly) protein is Cytochrome P450 6a9 (Cyp6a9).